The chain runs to 176 residues: Glutamyl-tRNA(Gln) amidotransferase subunit F, mitochondrial (176 aa).

The protein belongs to the GatF family. Subunit of the heterotrimeric GatFAB amidotransferase (AdT) complex, composed of A, B and F subunits.

The protein resides in the mitochondrion inner membrane. It catalyses the reaction L-glutamyl-tRNA(Gln) + L-glutamine + ATP + H2O = L-glutaminyl-tRNA(Gln) + L-glutamate + ADP + phosphate + H(+). In terms of biological role, allows the formation of correctly charged Gln-tRNA(Gln) through the transamidation of misacylated Glu-tRNA(Gln) in the mitochondria. The reaction takes place in the presence of glutamine and ATP through an activated gamma-phospho-Glu-tRNA(Gln). Required for proper protein synthesis within the mitochondrion. This Yarrowia lipolytica (strain CLIB 122 / E 150) (Yeast) protein is Glutamyl-tRNA(Gln) amidotransferase subunit F, mitochondrial.